The following is a 567-amino-acid chain: DNA ligase B (567 aa).

The active-site N6-AMP-lysine intermediate is the lysine 132.

This sequence belongs to the NAD-dependent DNA ligase family. LigB subfamily.

The catalysed reaction is NAD(+) + (deoxyribonucleotide)n-3'-hydroxyl + 5'-phospho-(deoxyribonucleotide)m = (deoxyribonucleotide)n+m + AMP + beta-nicotinamide D-nucleotide.. Its function is as follows. Catalyzes the formation of phosphodiester linkages between 5'-phosphoryl and 3'-hydroxyl groups in double-stranded DNA using NAD as a coenzyme and as the energy source for the reaction. In Yersinia pestis, this protein is DNA ligase B.